Reading from the N-terminus, the 350-residue chain is MVAPAPLVLSLGDPAGIGPDITLTAWAQRRELGLPAFLVAGDPEALKARVRQLGLTVPLAETGPEDAAGHFAEALPVMPAGPASTALPGAPDASSAPCVVASLEAALGLVQAGRAAALVTNPLAKSVMYAGGFPFPGHTEFLAARAARPGRPAPHPVMMIWSEQLAVVPATIHLPYADVPGHLTIDLLVETGRIVAGDMARRFGLAHPRLVFCGLNPHAGEEGTLGTEDEAIVRPAVEALKREGIDARGPLPADTLFHPQARAGYDVAVGMYHDQVLIPAKTLAFHDGVNVTLGLPFIRTSPDHGTAFDIAGTGRANPSSLVAALRLARRLADAEARLAAREGHRAASVA.

Residues histidine 138 and threonine 139 each contribute to the substrate site. Residues histidine 173, histidine 218, and histidine 273 each coordinate a divalent metal cation. Residues lysine 281, asparagine 290, and arginine 299 each coordinate substrate.

This sequence belongs to the PdxA family. In terms of assembly, homodimer. Zn(2+) is required as a cofactor. The cofactor is Mg(2+). It depends on Co(2+) as a cofactor.

The protein resides in the cytoplasm. The catalysed reaction is 4-(phosphooxy)-L-threonine + NAD(+) = 3-amino-2-oxopropyl phosphate + CO2 + NADH. It functions in the pathway cofactor biosynthesis; pyridoxine 5'-phosphate biosynthesis; pyridoxine 5'-phosphate from D-erythrose 4-phosphate: step 4/5. Its function is as follows. Catalyzes the NAD(P)-dependent oxidation of 4-(phosphooxy)-L-threonine (HTP) into 2-amino-3-oxo-4-(phosphooxy)butyric acid which spontaneously decarboxylates to form 3-amino-2-oxopropyl phosphate (AHAP). The polypeptide is 4-hydroxythreonine-4-phosphate dehydrogenase (Xanthobacter autotrophicus (strain ATCC BAA-1158 / Py2)).